The following is a 152-amino-acid chain: 2-C-methyl-D-erythritol 2,4-cyclodiphosphate synthase (152 aa).

Residues D8 and H10 each coordinate a divalent metal cation. 4-CDP-2-C-methyl-D-erythritol 2-phosphate is bound by residues 8-10 (DSH) and 34-35 (HS). Position 42 (H42) interacts with a divalent metal cation. 4-CDP-2-C-methyl-D-erythritol 2-phosphate-binding positions include 56–58 (DIG), 61–65 (FPDTD), 100–106 (LDRPKLG), and 131–135 (FKTSE).

Belongs to the IspF family. Homotrimer. It depends on a divalent metal cation as a cofactor.

The enzyme catalyses 4-CDP-2-C-methyl-D-erythritol 2-phosphate = 2-C-methyl-D-erythritol 2,4-cyclic diphosphate + CMP. Its pathway is isoprenoid biosynthesis; isopentenyl diphosphate biosynthesis via DXP pathway; isopentenyl diphosphate from 1-deoxy-D-xylulose 5-phosphate: step 4/6. Its function is as follows. Involved in the biosynthesis of isopentenyl diphosphate (IPP) and dimethylallyl diphosphate (DMAPP), two major building blocks of isoprenoid compounds. Catalyzes the conversion of 4-diphosphocytidyl-2-C-methyl-D-erythritol 2-phosphate (CDP-ME2P) to 2-C-methyl-D-erythritol 2,4-cyclodiphosphate (ME-CPP) with a corresponding release of cytidine 5-monophosphate (CMP). This Thermus thermophilus (strain ATCC 27634 / DSM 579 / HB8) protein is 2-C-methyl-D-erythritol 2,4-cyclodiphosphate synthase.